Here is a 216-residue protein sequence, read N- to C-terminus: Co-chaperone protein SBA1 (216 aa).

Ser-2 is modified (N-acetylserine). A CS domain is found at 5 to 108 (VINPQVAWAQ…LESEYWPRLT (104 aa)). 2 repeats span residues 141–156 (AQGMDFSQMMGGAGGA) and 160–174 (GGMDFSQMMGGAGGA). Residues 169 to 216 (GGAGGAGSPDMAQLQQLLAQSGGNLDMGDFKENDEEDEEEEIEPEVKA) are disordered. The segment covering 200–216 (ENDEEDEEEEIEPEVKA) has biased composition (acidic residues).

It belongs to the p23/wos2 family. In terms of assembly, interacts with HSP82.

Acts as a co-chaperone. This Saccharomyces cerevisiae (strain ATCC 204508 / S288c) (Baker's yeast) protein is Co-chaperone protein SBA1 (SBA1).